A 1979-amino-acid polypeptide reads, in one-letter code: Myosin-11 (1979 aa).

The residue at position 2 (Ser2) is a Blocked amino end (Ser). Positions 30 to 80 (SAKKLVWVPSEKHGFEAASIKEEKGDEVTVELQENGKKVTLSKDDIQKMNP) constitute a Myosin N-terminal SH3-like domain. The Myosin motor domain occupies 84–789 (SKVEDMAELT…VLAHLEEERD (706 aa)). Lys128 is modified (N6,N6,N6-trimethyllysine). 177-184 (GESGAGKT) is an ATP binding site. Actin-binding regions lie at residues 667 to 689 (LTKL…IPNH) and 768 to 782 (RIGQ…GVLA). The IQ domain occupies 792–821 (ITDVIIAFQAQCRGYLARKAFAKRQQQLTA). The rodlike tail (S2 and LMM domains) stretch occupies residues 850-1979 (LLQVTRQEEE…DGDFNGKASE (1130 aa)). Residues 850–1979 (LLQVTRQEEE…DGDFNGKASE (1130 aa)) adopt a coiled-coil conformation. Disordered regions lie at residues 1130–1150 (QEDL…KRDL), 1709–1736 (RKQA…LQDE), and 1891–1979 (QLEE…KASE). Residues 1135–1150 (SEKAARNKAEKQKRDL) show a composition bias toward basic and acidic residues. Basic and acidic residues predominate over residues 1968–1979 (GRDGDFNGKASE).

This sequence belongs to the TRAFAC class myosin-kinesin ATPase superfamily. Myosin family. In terms of assembly, muscle myosin is a hexameric protein that consists of 2 heavy chain subunits (MHC), 2 alkali light chain subunits (MLC) and 2 regulatory light chain subunits (MLC-2).

It is found in the cytoplasm. The protein resides in the myofibril. In terms of biological role, muscle contraction. The protein is Myosin-11 (MYH11) of Gallus gallus (Chicken).